Here is a 3147-residue protein sequence, read N- to C-terminus: Probable polyketide synthase 1 (3147 aa).

Residues 12–457 (SSDVAVIGVG…GSNCHLIIQE (446 aa)) form the Ketosynthase family 3 (KS3) domain. Residues Cys-180 and His-319 each act as for beta-ketoacyl synthase activity in the active site. The tract at residues 345–369 (QLNNFSTDGNDNDDDDDDNTSPEPL) is disordered. Acidic residues predominate over residues 354 to 364 (NDNDDDDDDNT). The active-site For beta-ketoacyl synthase activity is His-380. The acyl/malonyl transferase stretch occupies residues 672 to 705 (GIYPSISVGHSFGEVSSYYLSGIISLETACKIVY). Catalysis depends on Ser-682, which acts as the For acyl/malonyl transferase activity. The segment at 976-1127 (NRLEGPTTSL…ATISLEQQQP (152 aa)) is N-terminal hotdog fold. Residues 976–1298 (NRLEGPTTSL…IKSTNPKSTK (323 aa)) enclose the PKS/mFAS DH domain. His-1014 functions as the Proton acceptor; for dehydratase activity in the catalytic mechanism. Residues 1149–1298 (DISKLDKFEL…IKSTNPKSTK (150 aa)) are C-terminal hotdog fold. Asp-1209 serves as the catalytic Proton donor; for dehydratase activity. In terms of domain architecture, Carrier spans 2568–2645 (SSNISLQDKI…SFLEKVNGLS (78 aa)). Ser-2605 is subject to O-(pantetheine 4'-phosphoryl)serine. The disordered stretch occupies residues 2723–2747 (PSLSQSDVLKTPPIKSLNNTKNSSL). Over residues 2738-2747 (SLNNTKNSSL) the composition is skewed to polar residues. The segment at 2789–3147 (VLGIGISVPG…FEGCFLKNVV (359 aa)) is chalcone synthase. Cys-2930 is an active-site residue.

This sequence in the C-terminal section; belongs to the thiolase-like superfamily. Chalcone/stilbene synthases family. As to quaternary structure, homodimer. Pantetheine 4'-phosphate is required as a cofactor.

It carries out the reaction (E)-4-coumaroyl-CoA + 3 malonyl-CoA + 3 H(+) = 2',4,4',6'-tetrahydroxychalcone + 3 CO2 + 4 CoA. It participates in secondary metabolite biosynthesis; flavonoid biosynthesis. In terms of biological role, probable polyketide synthase. Produces only acylpyrones; in vitro. This chain is Probable polyketide synthase 1 (stlA), found in Dictyostelium discoideum (Social amoeba).